The following is a 214-amino-acid chain: Probable transaldolase (214 aa).

Residue lysine 83 is the Schiff-base intermediate with substrate of the active site.

It belongs to the transaldolase family. Type 3B subfamily.

It localises to the cytoplasm. The enzyme catalyses D-sedoheptulose 7-phosphate + D-glyceraldehyde 3-phosphate = D-erythrose 4-phosphate + beta-D-fructose 6-phosphate. Its pathway is carbohydrate degradation; pentose phosphate pathway; D-glyceraldehyde 3-phosphate and beta-D-fructose 6-phosphate from D-ribose 5-phosphate and D-xylulose 5-phosphate (non-oxidative stage): step 2/3. Functionally, transaldolase is important for the balance of metabolites in the pentose-phosphate pathway. The protein is Probable transaldolase of Leptospira borgpetersenii serovar Hardjo-bovis (strain JB197).